The sequence spans 209 residues: Thymidylate kinase (209 aa).

An ATP-binding site is contributed by 10–17 (GPEGAGKT).

This sequence belongs to the thymidylate kinase family.

The enzyme catalyses dTMP + ATP = dTDP + ADP. In terms of biological role, phosphorylation of dTMP to form dTDP in both de novo and salvage pathways of dTTP synthesis. This is Thymidylate kinase from Anoxybacillus flavithermus (strain DSM 21510 / WK1).